A 183-amino-acid polypeptide reads, in one-letter code: Large ribosomal subunit protein uL13m (183 aa).

The protein belongs to the universal ribosomal protein uL13 family. In terms of assembly, component of the mitochondrial large ribosomal subunit (mt-LSU). Mature N.crassa 74S mitochondrial ribosomes consist of a small (37S) and a large (54S) subunit. The 37S small subunit contains a 16S ribosomal RNA (16S mt-rRNA) and 32 different proteins. The 54S large subunit contains a 23S rRNA (23S mt-rRNA) and 42 different proteins.

It localises to the mitochondrion. Its function is as follows. Component of the mitochondrial ribosome (mitoribosome), a dedicated translation machinery responsible for the synthesis of mitochondrial genome-encoded proteins, including at least some of the essential transmembrane subunits of the mitochondrial respiratory chain. The mitoribosomes are attached to the mitochondrial inner membrane and translation products are cotranslationally integrated into the membrane. This is Large ribosomal subunit protein uL13m (mrpl23) from Neurospora crassa (strain ATCC 24698 / 74-OR23-1A / CBS 708.71 / DSM 1257 / FGSC 987).